We begin with the raw amino-acid sequence, 271 residues long: Putative two-component membrane permease complex subunit SMU_746c (271 aa).

The next 2 membrane-spanning stretches (helical) occupy residues 34 to 54 (LAYI…TIWM) and 70 to 90 (FFSP…PTVP).

The protein belongs to the UPF0703 family. Interacts with SMU_747c.

The protein localises to the cell membrane. In terms of biological role, could be part of a two-component membrane permease system responsible for amino acid transport under low pH. Involved in acidogenesis, biofilm formation and low-pH survival. The sequence is that of Putative two-component membrane permease complex subunit SMU_746c from Streptococcus mutans serotype c (strain ATCC 700610 / UA159).